The chain runs to 161 residues: Protein lin-52 (161 aa).

The segment at 137 to 161 is disordered; the sequence is TGSASPRYLQPTPPKNVAEETTGSQ.

This sequence belongs to the lin-52 family. As to quaternary structure, component of the DRM complex, at least composed of lin-9, lin-35, lin-37, lin-52, lin-53, lin-54- dpl-1 and efl-1. Interacts with zft-11; the interaction is required to suppress the activation of non-neuronal genes in neurons.

Its subcellular location is the nucleus. Synthetic multivulva class B (synMuvB) protein. SynMuvB proteins are required to repress the induction of vulval development by Ras signaling and probably act by forming the multiprotein DRM complex that represses transcription. In association with the zinc finger protein ztf-11, negatively regulates the expression of non-neuronal genes during neurogenesis. This is Protein lin-52 from Caenorhabditis elegans.